A 420-amino-acid polypeptide reads, in one-letter code: Tyrosine--tRNA ligase 2 (420 aa).

An L-tyrosine-binding site is contributed by Tyr36. Positions 41–50 (PTADSLHIGH) match the 'HIGH' region motif. L-tyrosine-binding residues include Tyr171 and Gln175. A 'KMSKS' region motif is present at residues 231–235 (KFGKT). Lys234 lines the ATP pocket. In terms of domain architecture, S4 RNA-binding spans 354–420 (LSLVDLLVTS…GKKKYFLLKY (67 aa)).

This sequence belongs to the class-I aminoacyl-tRNA synthetase family. TyrS type 1 subfamily. As to quaternary structure, homodimer.

It localises to the cytoplasm. The enzyme catalyses tRNA(Tyr) + L-tyrosine + ATP = L-tyrosyl-tRNA(Tyr) + AMP + diphosphate + H(+). Functionally, catalyzes the attachment of tyrosine to tRNA(Tyr) in a two-step reaction: tyrosine is first activated by ATP to form Tyr-AMP and then transferred to the acceptor end of tRNA(Tyr). The polypeptide is Tyrosine--tRNA ligase 2 (Enterococcus faecalis (strain ATCC 700802 / V583)).